Consider the following 114-residue polypeptide: Putative cysteine proteinase inhibitor 9 (114 aa).

The signal sequence occupies residues 1–23 (MRTSSLVLFAAVAVFGAACTAAA).

Belongs to the cystatin family. Phytocystatin subfamily.

Its subcellular location is the secreted. Its function is as follows. Specific inhibitor of cysteine proteinases. Probably involved in the regulation of endogenous processes and in defense against pests and pathogens. This is Putative cysteine proteinase inhibitor 9 from Oryza sativa subsp. japonica (Rice).